Here is a 67-residue protein sequence, read N- to C-terminus: Probable pilin MJ1400 (67 aa).

Residues 1 to 13 (MKFIMKFIKSNKG) constitute a propeptide that is removed on maturation. The QXSXEXXXL signature appears at 14-22 (QISLEFSLL).

In terms of processing, the N-terminus is cleaved by the prepilin peptidase EppA, which recognizes the class III signal sequence.

The protein localises to the secreted. Its subcellular location is the cell surface. The protein resides in the fimbrium. The sequence is that of Probable pilin MJ1400 from Methanocaldococcus jannaschii (strain ATCC 43067 / DSM 2661 / JAL-1 / JCM 10045 / NBRC 100440) (Methanococcus jannaschii).